A 134-amino-acid chain; its full sequence is Ribosome-binding factor A (134 aa).

The protein belongs to the RbfA family. In terms of assembly, monomer. Binds 30S ribosomal subunits, but not 50S ribosomal subunits or 70S ribosomes.

The protein resides in the cytoplasm. In terms of biological role, one of several proteins that assist in the late maturation steps of the functional core of the 30S ribosomal subunit. Associates with free 30S ribosomal subunits (but not with 30S subunits that are part of 70S ribosomes or polysomes). Required for efficient processing of 16S rRNA. May interact with the 5'-terminal helix region of 16S rRNA. In Tolumonas auensis (strain DSM 9187 / NBRC 110442 / TA 4), this protein is Ribosome-binding factor A.